A 962-amino-acid chain; its full sequence is Glycine dehydrogenase (decarboxylating) (962 aa).

The residue at position 709 (K709) is an N6-(pyridoxal phosphate)lysine.

Belongs to the GcvP family. As to quaternary structure, the glycine cleavage system is composed of four proteins: P, T, L and H. The cofactor is pyridoxal 5'-phosphate.

The catalysed reaction is N(6)-[(R)-lipoyl]-L-lysyl-[glycine-cleavage complex H protein] + glycine + H(+) = N(6)-[(R)-S(8)-aminomethyldihydrolipoyl]-L-lysyl-[glycine-cleavage complex H protein] + CO2. Functionally, the glycine cleavage system catalyzes the degradation of glycine. The P protein binds the alpha-amino group of glycine through its pyridoxal phosphate cofactor; CO(2) is released and the remaining methylamine moiety is then transferred to the lipoamide cofactor of the H protein. The chain is Glycine dehydrogenase (decarboxylating) from Shewanella baltica (strain OS223).